Reading from the N-terminus, the 113-residue chain is Na(+)/H(+) antiporter subunit C1 (113 aa).

The next 3 membrane-spanning stretches (helical) occupy residues 1 to 21 (MEII…YLVL), 28 to 48 (IVMG…TMGG), and 72 to 92 (LILT…VLAF).

This sequence belongs to the CPA3 antiporters (TC 2.A.63) subunit C family. May form a heterooligomeric complex that consists of seven subunits: mnhA1, mnhB1, mnhC1, mnhD1, mnhE1, mnhF1 and mnhG1.

It localises to the cell membrane. In terms of biological role, mnh complex is a Na(+)/H(+) antiporter involved in Na(+) excretion. This chain is Na(+)/H(+) antiporter subunit C1 (mnhC1), found in Staphylococcus haemolyticus (strain JCSC1435).